The sequence spans 177 residues: Flavodoxin (177 aa).

The region spanning 4–173 (IGIFFGSDTG…RIDTWLDKLK (170 aa)) is the Flavodoxin-like domain.

The protein belongs to the flavodoxin family. It depends on FMN as a cofactor.

Its function is as follows. Low-potential electron donor to a number of redox enzymes. NifF is the electron donor to nitrogenase. This is Flavodoxin (nifF) from Enterobacter agglomerans (Erwinia herbicola).